We begin with the raw amino-acid sequence, 168 residues long: Protein FAM163A (168 aa).

A helical membrane pass occupies residues V6 to C26.

This sequence belongs to the FAM163 family.

It is found in the membrane. The polypeptide is Protein FAM163A (Fam163a) (Mus musculus (Mouse)).